The chain runs to 153 residues: Endoribonuclease RegB (153 aa).

Its activity is regulated as follows. Activity is stimulated 10- to 100-fold by host ribosomal protein S1, which also helps confer substrate choice. Functionally, essential to the early nucleolytic processing of a number of T4 messenger RNAs. Specifically cleaves after the GG dinucleotide GGAG within consensus 5'-GGAGRAYARAA-3' (R is a purine and Y is a pyrimidine) sequences found mainly in translation initiation sites. In Enterobacteria phage T4 (Bacteriophage T4), this protein is Endoribonuclease RegB (regB).